The chain runs to 945 residues: Kinesin-like protein KIN-UA (945 aa).

The tract at residues 1–54 (MAANGRASVRPVERHGAPPRPAGRSRSVAPPSRRPSPSPSRARPAAADNDGGSD) is disordered. The span at 22 to 31 (AGRSRSVAPP) shows a compositional bias: low complexity. A Kinesin motor domain is found at 57–399 (RVRVAVRLRP…IMFGQRAMKI (343 aa)). Residue 142–149 (GQTGTGKT) coordinates ATP. The D-BOX signature appears at 369 to 377 (RTSLIVTIG). Positions 415 to 644 (YKKVEHEVDH…ILRLKQSLAD (230 aa)) form a coiled coil. 4 ARM repeats span residues 683-722 (RSNI…NLAA), 724-764 (DVNQ…NLAM), 766-806 (GSNQ…NLCG), and 808-847 (EKLH…NFAK).

Belongs to the TRAFAC class myosin-kinesin ATPase superfamily. Kinesin family. Ungrouped subfamily.

Its subcellular location is the cytoplasm. The protein localises to the cytoskeleton. This Oryza sativa subsp. japonica (Rice) protein is Kinesin-like protein KIN-UA.